The chain runs to 625 residues: E3 ubiquitin-protein ligase synoviolin (625 aa).

The Cytoplasmic segment spans residues 1–4 (MVRA). A helical transmembrane segment spans residues 5–25 (ALVTATSLALTGAVVAHAYFL). The Lumenal portion of the chain corresponds to 26–40 (KHQFYPTVVYLTKSS). A helical transmembrane segment spans residues 41–61 (PSMAVLYIQAFVLVFLLGKLM). Residues 62–98 (RKVFFGQLRAAEMEHLIERSWYAVTETCLAFTVFRDD) are Cytoplasmic-facing. The helical transmembrane segment at 99–119 (FSPRFVALFTLLLFLKCFHWL) threads the bilayer. Residues 120–135 (AEDRVDFMERSPNISW) lie on the Lumenal side of the membrane. Residues 136-156 (VFHFRVLSLMVLLGVMDFLFV) traverse the membrane as a helical segment. At 157-169 (NHACHSIITRGAS) the chain is on the cytoplasmic side. A helical membrane pass occupies residues 170–190 (VQLVFGFEYAILMTMVLTTFI). The Lumenal portion of the chain corresponds to 191–212 (KYTLHTIDLQSENPWDNKAVYM). A helical transmembrane segment spans residues 213 to 235 (LYTELFTGFIKVLLYMAFMTIMI). The interval 236–270 (KVHTFPLFAIRPMYLAMRQFKKAVTDAIMSRRAIR) is interaction with p53/TP53. Residues 236–625 (KVHTFPLFAI…GNLLKLASVN (390 aa)) are Cytoplasmic-facing. 8 residues coordinate Zn(2+): C291, C294, C307, H309, H312, C315, C326, and C329. The segment at 291 to 330 (CIICREEMVTGAKKLPCNHIFHSSCLRSWFQRQQTCPTCR) adopts an RING-type; atypical zinc-finger fold. Disordered stretches follow at residues 337 to 361 (SQPN…NAPI), 390 to 434 (PPPA…SAAP), 462 to 487 (FMSS…LEQE), and 523 to 625 (LSPP…ASVN). The segment covering 342–361 (TPAPPAAQAPAPPAPANAPI) has biased composition (pro residues). Low complexity predominate over residues 423–434 (AQSTAEAASAAP). Over residues 462-471 (FMSSMPPPPS) the composition is skewed to pro residues. A compositionally biased stretch (polar residues) spans 523–564 (LSPPRSETNTGETSESANVESSPSTANTETAGQEIQSQSGES).

This sequence belongs to the HRD1 family. As to quaternary structure, homodimer.

The protein resides in the endoplasmic reticulum membrane. It carries out the reaction S-ubiquitinyl-[E2 ubiquitin-conjugating enzyme]-L-cysteine + [acceptor protein]-L-lysine = [E2 ubiquitin-conjugating enzyme]-L-cysteine + N(6)-ubiquitinyl-[acceptor protein]-L-lysine.. Its pathway is protein modification; protein ubiquitination. Its function is as follows. E3 ubiquitin-protein ligase which accepts ubiquitin specifically from endoplasmic reticulum-associated UBC7 E2 ligase and transfers it to substrates, promoting their degradation. Component of the endoplasmic reticulum quality control (ERQC) system also called ER-associated degradation (ERAD) involved in ubiquitin-dependent degradation of misfolded endoplasmic reticulum proteins. Also promotes the degradation of normal but naturally short-lived proteins. Protects cells from ER stress-induced apoptosis. Sequesters p53 in the cytoplasm and promotes its degradation, thereby negatively regulating its biological function in transcription, cell cycle regulation and apoptosis. This is E3 ubiquitin-protein ligase synoviolin (syvn1) from Danio rerio (Zebrafish).